A 384-amino-acid polypeptide reads, in one-letter code: Probable peptidoglycan glycosyltransferase FtsW (384 aa).

The Cytoplasmic segment spans residues Met-1–Gly-19. The chain crosses the membrane as a helical span at residues Leu-20–Ile-40. Residues Lys-41 to Arg-54 lie on the Periplasmic side of the membrane. A helical transmembrane segment spans residues His-55–Glu-75. Topologically, residues Arg-76–Arg-83 are cytoplasmic. The helical transmembrane segment at Leu-84–Gly-104 threads the bilayer. At Ala-105 to Gly-110 the chain is on the periplasmic side. A helical membrane pass occupies residues Phe-111–Ala-131. The Cytoplasmic portion of the chain corresponds to Ser-132–Gly-143. A helical transmembrane segment spans residues Asn-144–Ala-164. Over Gln-165–Pro-166 the chain is Periplasmic. A helical membrane pass occupies residues Asp-167–Ala-187. Lys-188 is a topological domain (cytoplasmic). A helical membrane pass occupies residues Leu-189 to Tyr-209. At Glu-210–Asp-267 the chain is on the periplasmic side. The helical transmembrane segment at Phe-268–Leu-288 threads the bilayer. Over Gln-289 to Cys-316 the chain is Cytoplasmic. Residues Gly-317–Leu-337 form a helical membrane-spanning segment. Topologically, residues Pro-338 to Thr-343 are periplasmic. A helical transmembrane segment spans residues Leu-344–Leu-364. Residues Leu-365–Ala-384 are Cytoplasmic-facing.

Belongs to the SEDS family. FtsW subfamily.

The protein resides in the cell inner membrane. It carries out the reaction [GlcNAc-(1-&gt;4)-Mur2Ac(oyl-L-Ala-gamma-D-Glu-L-Lys-D-Ala-D-Ala)](n)-di-trans,octa-cis-undecaprenyl diphosphate + beta-D-GlcNAc-(1-&gt;4)-Mur2Ac(oyl-L-Ala-gamma-D-Glu-L-Lys-D-Ala-D-Ala)-di-trans,octa-cis-undecaprenyl diphosphate = [GlcNAc-(1-&gt;4)-Mur2Ac(oyl-L-Ala-gamma-D-Glu-L-Lys-D-Ala-D-Ala)](n+1)-di-trans,octa-cis-undecaprenyl diphosphate + di-trans,octa-cis-undecaprenyl diphosphate + H(+). It participates in cell wall biogenesis; peptidoglycan biosynthesis. Functionally, peptidoglycan polymerase that is essential for cell division. The chain is Probable peptidoglycan glycosyltransferase FtsW from Tolumonas auensis (strain DSM 9187 / NBRC 110442 / TA 4).